Reading from the N-terminus, the 143-residue chain is Transcription antitermination protein NusB (143 aa).

It belongs to the NusB family.

Functionally, involved in transcription antitermination. Required for transcription of ribosomal RNA (rRNA) genes. Binds specifically to the boxA antiterminator sequence of the ribosomal RNA (rrn) operons. The protein is Transcription antitermination protein NusB of Buchnera aphidicola subsp. Acyrthosiphon pisum (strain APS) (Acyrthosiphon pisum symbiotic bacterium).